Reading from the N-terminus, the 262-residue chain is 5'-nucleotidase SurE (262 aa).

A divalent metal cation contacts are provided by D13, D14, S44, and N97.

This sequence belongs to the SurE nucleotidase family. Requires a divalent metal cation as cofactor.

Its subcellular location is the cytoplasm. It carries out the reaction a ribonucleoside 5'-phosphate + H2O = a ribonucleoside + phosphate. Its function is as follows. Nucleotidase that shows phosphatase activity on nucleoside 5'-monophosphates. This is 5'-nucleotidase SurE from Myxococcus xanthus (strain DK1622).